We begin with the raw amino-acid sequence, 346 residues long: MLYRSALRASCGFTPRLASTRSRLASSLVLLEHKAGRLNDASLSAVTAAKATGNDTHGILVGSMAEVEGVLKEAKKIKDLSKIYLATSDAYSHSLAEALAPLLASIVPTKDVSHVFAAHTAVGKNVFPRLAGMLDSSLVADIIALDPSRGTFTRPIYAGNAVLTVKSSPKDSVKIVTVRSTAFDKAAIADGSADVEDVEILAIESPTQFISEELTVSSRPDLASAARVVSGGRALKSKESFDKILDPLADSLGAAVGASRAAVDAGYADNSLQVGQTGKVVAPELYVAVGISGAIQHLAGMKESKMIVAINKDPDAPIFQVADVGLVADLFESVPQLVQEIGSIKA.

An FAD-binding site is contributed by 285 to 313 (LYVAVGISGAIQHLAGMKESKMIVAINKD).

This sequence belongs to the ETF alpha-subunit/FixB family. Heterodimer of an alpha and a beta subunit. Requires FAD as cofactor.

Its subcellular location is the mitochondrion matrix. Functionally, the electron transfer flavoprotein serves as a specific electron acceptor for several dehydrogenases, including five acyl-CoA dehydrogenases, glutaryl-CoA and sarcosine dehydrogenase. It transfers the electrons to the main mitochondrial respiratory chain via ETF-ubiquinone oxidoreductase (ETF dehydrogenase). This Cryptococcus neoformans var. grubii (Filobasidiella neoformans var. grubii) protein is Probable electron transfer flavoprotein subunit alpha, mitochondrial (ETF1).